The sequence spans 130 residues: Putative F-box protein At1g77880 (130 aa).

The F-box domain maps to 18-64 (KVSIPYLPDDLLLNCLARISRLYYPTLSLVSKRFRSLLASTELYETR).

This Arabidopsis thaliana (Mouse-ear cress) protein is Putative F-box protein At1g77880.